Here is a 261-residue protein sequence, read N- to C-terminus: Src-like-adapter 2 (261 aa).

Basic residues predominate over residues 1–10 (MGSLPSRRKS). Residues 1–31 (MGSLPSRRKSLPSPSLSSSVQGQGPVTMEAE) are disordered. Gly2 carries N-myristoyl glycine lipidation. Residues 32-92 (RSKATAVALG…PSVHVAKVSH (61 aa)) enclose the SH3 domain. Positions 94–191 (WLYEGLSREK…DICCLLKEPC (98 aa)) constitute an SH2 domain. The tract at residues 195–261 (RAGPLPGKDI…NDEAVSLDDA (67 aa)) is SLA C-terminal.

As to quaternary structure, interacts (via SH2 domain) with ZAP70 (phosphorylated) and CD3Z (phosphorylated). Interacts (via SH2 domain) with CSF1R (phosphorylated). Interacts (via its C-terminal domain) with CBL (phosphorylated). In terms of processing, phosphorylated by CSF1R. As to expression, predominantly expressed in immune system, with highest levels in peripheral blood leukocytes. Expressed in spleen, thymus and lymph nodes. Expressed in T-cells as well as in monocytes, and at low level in B-cells. Also detected in placenta, prostate, skin, retina and colon.

The protein resides in the cytoplasm. Its subcellular location is the cell membrane. It is found in the cytoplasmic vesicle. In terms of biological role, adapter protein, which negatively regulates T-cell receptor (TCR) signaling. Inhibits T-cell antigen-receptor induced activation of nuclear factor of activated T-cells. May act by linking signaling proteins such as ZAP70 with CBL, leading to a CBL dependent degradation of signaling proteins. The sequence is that of Src-like-adapter 2 (SLA2) from Homo sapiens (Human).